Here is a 324-residue protein sequence, read N- to C-terminus: DNA primase small subunit PriS (324 aa).

Residues Asp-94, Asp-96, and Asp-274 contribute to the active site.

This sequence belongs to the eukaryotic-type primase small subunit family. In terms of assembly, heterodimer of a small subunit (PriS) and a large subunit (PriL). Mg(2+) serves as cofactor. It depends on Mn(2+) as a cofactor.

Catalytic subunit of DNA primase, an RNA polymerase that catalyzes the synthesis of short RNA molecules used as primers for DNA polymerase during DNA replication. The small subunit contains the primase catalytic core and has DNA synthesis activity on its own. Binding to the large subunit stabilizes and modulates the activity, increasing the rate of DNA synthesis while decreasing the length of the DNA fragments, and conferring RNA synthesis capability. The DNA polymerase activity may enable DNA primase to also catalyze primer extension after primer synthesis. May also play a role in DNA repair. This chain is DNA primase small subunit PriS, found in Methanobrevibacter smithii (strain ATCC 35061 / DSM 861 / OCM 144 / PS).